The sequence spans 366 residues: Alanine racemase (366 aa).

The active-site Proton acceptor; specific for D-alanine is Lys-40. At Lys-40 the chain carries N6-(pyridoxal phosphate)lysine. Residue Arg-136 participates in substrate binding. Residue Tyr-263 is the Proton acceptor; specific for L-alanine of the active site. Met-310 lines the substrate pocket.

Belongs to the alanine racemase family. Requires pyridoxal 5'-phosphate as cofactor.

The enzyme catalyses L-alanine = D-alanine. It participates in amino-acid biosynthesis; D-alanine biosynthesis; D-alanine from L-alanine: step 1/1. Functionally, catalyzes the interconversion of L-alanine and D-alanine. May also act on other amino acids. This chain is Alanine racemase (alr), found in Streptococcus equi subsp. equi (strain 4047).